The primary structure comprises 172 residues: Low molecular mass early light-inducible protein HV90, chloroplastic (172 aa).

Residues 1 to 38 constitute a chloroplast transit peptide; that stretch reads MATMMSMSSFAGAAVVPRSSASSFGARSLPALGRRALV. 2 helical membrane-spanning segments follow: residues 106-126 and 150-170; these read GQAWFAYTVAVLSMASLVPLL and FAMLGLVALAATEIITGAPFI.

This sequence belongs to the ELIP/psbS family.

The protein resides in the plastid. It is found in the chloroplast membrane. Its function is as follows. Probably involved in the integration of pigments into the mature pigment-protein complexes. The sequence is that of Low molecular mass early light-inducible protein HV90, chloroplastic from Hordeum vulgare (Barley).